The primary structure comprises 271 residues: L-aspartate dehydrogenase (271 aa).

Positions 124 and 192 each coordinate NAD(+). His222 is an active-site residue.

It belongs to the L-aspartate dehydrogenase family.

It catalyses the reaction L-aspartate + NADP(+) + H2O = oxaloacetate + NH4(+) + NADPH + H(+). It carries out the reaction L-aspartate + NAD(+) + H2O = oxaloacetate + NH4(+) + NADH + H(+). It functions in the pathway cofactor biosynthesis; NAD(+) biosynthesis; iminoaspartate from L-aspartate (dehydrogenase route): step 1/1. Its function is as follows. Specifically catalyzes the NAD or NADP-dependent dehydrogenation of L-aspartate to iminoaspartate. This Methanosarcina acetivorans (strain ATCC 35395 / DSM 2834 / JCM 12185 / C2A) protein is L-aspartate dehydrogenase.